The following is a 549-amino-acid chain: Glucose-6-phosphate isomerase (549 aa).

Catalysis depends on Glu-355, which acts as the Proton donor. Residues His-387 and Lys-515 contribute to the active site.

It belongs to the GPI family.

The protein localises to the cytoplasm. The enzyme catalyses alpha-D-glucose 6-phosphate = beta-D-fructose 6-phosphate. It participates in carbohydrate biosynthesis; gluconeogenesis. The protein operates within carbohydrate degradation; glycolysis; D-glyceraldehyde 3-phosphate and glycerone phosphate from D-glucose: step 2/4. Functionally, catalyzes the reversible isomerization of glucose-6-phosphate to fructose-6-phosphate. This Histophilus somni (strain 2336) (Haemophilus somnus) protein is Glucose-6-phosphate isomerase.